Here is a 326-residue protein sequence, read N- to C-terminus: MAFTPFPPRQPTASARLPLTLMTLDDWALATITGTDSEKYMQGQVTADVSQMTEDQHLLAAHCDAKGKMWSNLRLFRDGDGFAWIERRSVRESQLTELKKYAVFSKVTIAPDDERVLLGVAGFQARAALANLFSELPSKEKQVIREGATTLLWFEHPAERFLIVTDEATANTLTDKLRGEAELNNSQQWLALNIEAGFPVIDAANSGQFIPQATNLQALGGISFKKGCYTGQEMVARAKFRGANKRALWLLAGSASRLPEAGEDLELKMGENWRRTGTVLAAVKLEDGQVVVQVVMNNDMEPDSIFRVRDDMNTLHIEPLPYSLEE.

Trp27 and Trp189 together coordinate folate.

It belongs to the tRNA-modifying YgfZ family.

It is found in the cytoplasm. Its function is as follows. Folate-binding protein involved in regulating the level of ATP-DnaA and in the modification of some tRNAs. It is probably a key factor in regulatory networks that act via tRNA modification, such as initiation of chromosomal replication. The polypeptide is tRNA-modifying protein YgfZ (Escherichia fergusonii (strain ATCC 35469 / DSM 13698 / CCUG 18766 / IAM 14443 / JCM 21226 / LMG 7866 / NBRC 102419 / NCTC 12128 / CDC 0568-73)).